The following is a 327-amino-acid chain: Putative HTH-type transcriptional regulatory protein MmarC6_0210 (327 aa).

The 56-residue stretch at 128 to 183 (LRETREKLKISVGELAEISRVSRKTIYKYEQNEANPSAEVAIKIEEYLDVPLIKGI) folds into the HTH cro/C1-type domain. The H-T-H motif DNA-binding region spans 139–158 (VGELAEISRVSRKTIYKYEQ).

The protein is Putative HTH-type transcriptional regulatory protein MmarC6_0210 of Methanococcus maripaludis (strain C6 / ATCC BAA-1332).